We begin with the raw amino-acid sequence, 351 residues long: MLLSLGSNGNFQLGLNNDEDVYSPQIVPFDRAIEKISCGGNHTLLLDEDSQLWACGDNRKGQCGYEVKEPLYNPLSPDYLRIFTRVSHERWVFLTCGWEFSVIVHADRRRVCSCGEGLSGELGQGNRSNSQGLREIDIPYLDDKEFIIDISAGLRHWICVTNEGNLYGCGDGRKGQLGPVVMKTVNKVSFLGRIEHAQAVVCGVQFSAVLQETGHVIVLGGEKWNVAAECDAWQANNSELSSSICSISANWSTLSLLSTEGCVYAFGRCDRAQKAHTKASDIVQIASGTEHNILRTKKGSVLIYGWNEHGNASNDDKRDVYDAKTLQLPGWAYIVAAGYATSWIVIEENHK.

4 RCC1 repeats span residues 1 to 48 (MLLS…LLDE), 50 to 106 (SQLW…IVHA), 108 to 162 (RRRV…CVTN), and 163 to 212 (EGNL…VLQE).

Its subcellular location is the cytoplasm. It is found in the nucleus. The sequence is that of RCC1 repeat-containing protein C10F6.04 from Schizosaccharomyces pombe (strain 972 / ATCC 24843) (Fission yeast).